A 653-amino-acid chain; its full sequence is Fidgetin-like protein 2 (653 aa).

Disordered stretches follow at residues 1–36 (MHWTPEHAQPLNQWPEQHLDVSSTTPSPAHKLELPP), 86–129 (ASFL…SGAL), and 216–240 (YGALPPPPGPPPAPYLTPGLPAPTP). The segment covering 10 to 27 (PLNQWPEQHLDVSSTTPS) has biased composition (polar residues). Residues 97–107 (EPWPGPEPPYP) show a composition bias toward pro residues. Gly residues predominate over residues 119-129 (KSGGGGGSGAL). Residues 219–240 (LPPPPGPPPAPYLTPGLPAPTP) are compositionally biased toward pro residues. ATP contacts are provided by residues Ala395 and 435 to 440 (GAGKAL).

The protein belongs to the AAA ATPase family. Mg(2+) is required as a cofactor.

It is found in the cytoplasm. The protein localises to the cell cortex. The catalysed reaction is ATP + H2O = ADP + phosphate + H(+). Microtubule-severing enzyme that negatively regulates cell migration and wound healing. In migrating cells, targets dynamic microtubules (MTs) at the leading edge and severs them, thereby suppressing motility. Microtubule severing releases ARHGEF2 which activates RHOA, which in turn regulates focal ahesion turnover via focal adhesion kinase, as opposed to F-actin polymerization, to suppress cell motility. Negative regulator of axon regeneration that suppresses axonal growth by selectively severing dynamic MTs in the distal axon shaft and growth cone. Contributes to proper cell branching during endothelial and neuronal development. The polypeptide is Fidgetin-like protein 2 (Homo sapiens (Human)).